The chain runs to 307 residues: Cuticle collagen 36 (307 aa).

Disordered regions lie at residues 76 to 102 (TRSR…GGPT) and 116 to 307 (QQGP…PPGY). The segment covering 86–102 (EGSGSGGSGSGGYGGPT) has biased composition (gly residues). 6 triple-helical region regions span residues 89–105 (GSGG…TGAG), 118–150 (GPAG…EGSI), 167–187 (GPQG…KGKS), 194–226 (GKNG…PGRV), 231–257 (GAAG…AGLT), and 260–295 (GGQG…EGSC). Over residues 157 to 168 (PSEPCIICPPGP) the composition is skewed to pro residues. The segment covering 186 to 196 (KSQERAADGKN) has biased composition (basic and acidic residues). The segment covering 202–220 (IGPPGPPGGVGEPGPPGPA) has biased composition (pro residues). Over residues 231-242 (GAAGPAGPRGVK) the composition is skewed to low complexity. Positions 258–278 (EIGGQGPPGDAGGPGPVGGQG) are enriched in gly residues. Over residues 279 to 288 (PPGPQGPQGP) the composition is skewed to pro residues.

The protein belongs to the cuticular collagen family. Collagen polypeptide chains are complexed within the cuticle by disulfide bonds and other types of covalent cross-links.

Functionally, nematode cuticles are composed largely of collagen-like proteins. The cuticle functions both as an exoskeleton and as a barrier to protect the worm from its environment. This is Cuticle collagen 36 (col-36) from Caenorhabditis elegans.